The following is a 267-amino-acid chain: MLQKVKLEDMIQSGMHFGHSTREWNPRMAPYIYGERNGRHILDLVQTYYLLNKVLAFLEEQAAQGKTFLFVGTKQQAAPLIAKTALACESFYVNQRWLGGMLTNWRTIQKSLRKLQEYRRAEERGDWNLLKKQEVARKRREKDRLEKYLSGVENMSRLPGVVILIGQTEEIHAVKECRQLGIPTVTLLDSNCDPNLADWFLPANDDSVSALRLILAWFQQAIQTGQLRSLEREAAKKQKIKKTGVKISGNRRTSSITKKRNPASSKI.

Positions 237 to 267 are disordered; it reads KQKIKKTGVKISGNRRTSSITKKRNPASSKI. Residues 250-267 show a composition bias toward polar residues; that stretch reads NRRTSSITKKRNPASSKI.

Belongs to the universal ribosomal protein uS2 family.

It localises to the plastid. The protein localises to the chloroplast. This Chlorella vulgaris (Green alga) protein is Small ribosomal subunit protein uS2c (rps2).